We begin with the raw amino-acid sequence, 1186 residues long: Partner and localizer of BRCA2 (1186 aa).

A required for its oligomerization and is important for its focal concentration at DNA damage sites region spans residues 1 to 160; sequence MDEPPGKPLS…QKRTFISQER (160 aa). An interaction with RAD51 region spans residues 1–200; sequence MDEPPGKPLS…PVTEIRTHLL (200 aa). An interaction with BRCA1 region spans residues 1-319; it reads MDEPPGKPLS…SKSGQLPTSS (319 aa). Residues 1-579 are DNA-binding (with the preference D loop &gt; dsDNA &gt; ssDNA); that stretch reads MDEPPGKPLS…EDSLSWSNSA (579 aa). Positions 9–41 form a coiled coil; sequence LSCEEKEKLKEKLAFLKREYSKTLARLQRAQRA. Disordered stretches follow at residues 52 to 72 and 95 to 157; these read VEEQ…HSEP and KTSI…TFIS. The segment covering 120–141 has biased composition (basic and acidic residues); the sequence is RTDDTQEHFPHRVSDPSGEQKQ. Positions 143-152 are enriched in basic residues; the sequence is LPSRRKKQQK. Phosphoserine occurs at positions 172 and 190. A disordered region spans residues 252–273; that stretch reads TLSDSGSSQHLEHIPPKGSSEL. The residue at position 285 (S285) is a Phosphoserine. The tract at residues 346–365 is disordered; the sequence is KEQNQTEKSLKSPSDTLDGR. S376 and S387 each carry phosphoserine. A chAM (Chromatin-association motif); required for chromatin association, mediates nucleosome association region spans residues 395–446; sequence SCTVPEGLLFPAEYYVRTTRSMSNCQRKVAVEAVIQSHLDVKKKGFKNKNKD. The disordered stretch occupies residues 440-525; the sequence is FKNKNKDASK…RKSACTPASD (86 aa). The residue at position 454 (S454) is a Phosphoserine. Positions 467 to 488 are enriched in polar residues; the sequence is GTCTGQPSSRTSQKLLSLTKVS. S660 carries the phosphoserine modification. Disordered regions lie at residues 679-698 and 774-798; these read PGKS…KTGL and KQFD…QGQP. The span at 687 to 698 shows a compositional bias: polar residues; sequence PNSQSQHTKTGL. The required for interaction with POLH and POLH DNA synthesis stimulation stretch occupies residues 775–1186; it reads QFDSSGSPAK…DGNIFVYHYS (412 aa). S781 bears the Phosphoserine mark. The tract at residues 853-1186 is interaction with RAD51, BRCA2 and POLH; it reads GNLQLVSELK…DGNIFVYHYS (334 aa). 7 WD repeats span residues 854-915, 917-961, 962-1009, 1010-1052, 1058-1109, 1115-1153, and 1155-1186; these read NLQL…WHFA, VPVL…QVLL, KSGN…LMPP, EETI…MHID, SVCH…MLYC, AGRF…LLPP, and SDQH…YHYS.

In terms of assembly, homooligomer; dissociated upon DNA damage thus allowing association with BRCA1. Oligomerization is essential for its focal accumulation at DNA breaks. Part of a BRCA complex containing BRCA1, BRCA2 and PALB2. Interacts with BRCA1 and this interaction is essential for its function in HRR. Interacts with RAD51AP1 and MORF4L1/MRG15. Component of the homologous recombination repair (HR) complex composed of ERCC5/XPG, BRCA2, PALB2, DSS1 and RAD51. Within the complex, interacts with ERCC5/XPG and BRCA2. Interacts with BRCA2, RAD51C, RAD51 and XRCC3; the interactions are direct and it may serve as a scaffold for a HR complex containing PALB2, BRCA2, RAD51C, RAD51 and XRCC3. Interacts with POLH; the interaction is direct.

Its subcellular location is the nucleus. In terms of biological role, plays a critical role in homologous recombination repair (HRR) through its ability to recruit BRCA2 and RAD51 to DNA breaks. Strongly stimulates the DNA strand-invasion activity of RAD51, stabilizes the nucleoprotein filament against a disruptive BRC3-BRC4 polypeptide and helps RAD51 to overcome the suppressive effect of replication protein A (RPA). Functionally cooperates with RAD51AP1 in promoting of D-loop formation by RAD51. Serves as the molecular scaffold in the formation of the BRCA1-PALB2-BRCA2 complex which is essential for homologous recombination. Via its WD repeats is proposed to scaffold a HR complex containing RAD51C and BRCA2 which is thought to play a role in HR-mediated DNA repair. Essential partner of BRCA2 that promotes the localization and stability of BRCA2. Also enables its recombinational repair and checkpoint functions of BRCA2. May act by promoting stable association of BRCA2 with nuclear structures, allowing BRCA2 to escape the effects of proteasome-mediated degradation. Binds DNA with high affinity for D loop, which comprises single-stranded, double-stranded and branched DNA structures. May play a role in the extension step after strand invasion at replication-dependent DNA double-strand breaks; together with BRCA2 is involved in both POLH localization at collapsed replication forks and DNA polymerization activity. The polypeptide is Partner and localizer of BRCA2 (PALB2) (Homo sapiens (Human)).